The chain runs to 149 residues: Large ribosomal subunit protein uL13 (149 aa).

Belongs to the universal ribosomal protein uL13 family. Part of the 50S ribosomal subunit.

In terms of biological role, this protein is one of the early assembly proteins of the 50S ribosomal subunit, although it is not seen to bind rRNA by itself. It is important during the early stages of 50S assembly. This is Large ribosomal subunit protein uL13 from Prosthecochloris aestuarii (strain DSM 271 / SK 413).